Reading from the N-terminus, the 264-residue chain is tRNA (guanine-N(7)-)-methyltransferase (264 aa).

A disordered region spans residues methionine 1 to proline 39. Residues threonine 18 to alanine 31 are compositionally biased toward low complexity. S-adenosyl-L-methionine-binding residues include glutamate 94, glutamate 119, aspartate 146, and aspartate 169. The active site involves aspartate 169. Residues lysine 173, aspartate 205, and threonine 240–glutamate 243 contribute to the substrate site.

It belongs to the class I-like SAM-binding methyltransferase superfamily. TrmB family.

It catalyses the reaction guanosine(46) in tRNA + S-adenosyl-L-methionine = N(7)-methylguanosine(46) in tRNA + S-adenosyl-L-homocysteine. It functions in the pathway tRNA modification; N(7)-methylguanine-tRNA biosynthesis. Functionally, catalyzes the formation of N(7)-methylguanine at position 46 (m7G46) in tRNA. This chain is tRNA (guanine-N(7)-)-methyltransferase, found in Burkholderia mallei (strain ATCC 23344).